A 393-amino-acid polypeptide reads, in one-letter code: SET domain-containing protein DDB_G0283443 (393 aa).

The SET domain occupies 17–312; it reads KKIEINETLE…KGDELSISYI (296 aa).

The protein belongs to the class V-like SAM-binding methyltransferase superfamily.

Probable methyltransferase. In Dictyostelium discoideum (Social amoeba), this protein is SET domain-containing protein DDB_G0283443.